We begin with the raw amino-acid sequence, 494 residues long: tRNA-2-methylthio-N(6)-dimethylallyladenosine synthase (494 aa).

The region spanning 4–120 (RSYQVRTFGC…LPVLLERARH (117 aa)) is the MTTase N-terminal domain. 6 residues coordinate [4Fe-4S] cluster: Cys-13, Cys-49, Cys-83, Cys-157, Cys-161, and Cys-164. One can recognise a Radical SAM core domain in the interval 143-374 (RASHHSAWVS…SLQDEMSWAE (232 aa)). Positions 376 to 449 (RAQVGRRVEI…PHHLTADGPL (74 aa)) constitute a TRAM domain. A disordered region spans residues 465 to 494 (RAIAGDTPRPDRPAVSLGMPQLRPSAPAAR).

This sequence belongs to the methylthiotransferase family. MiaB subfamily. As to quaternary structure, monomer. [4Fe-4S] cluster serves as cofactor.

The protein localises to the cytoplasm. It carries out the reaction N(6)-dimethylallyladenosine(37) in tRNA + (sulfur carrier)-SH + AH2 + 2 S-adenosyl-L-methionine = 2-methylsulfanyl-N(6)-dimethylallyladenosine(37) in tRNA + (sulfur carrier)-H + 5'-deoxyadenosine + L-methionine + A + S-adenosyl-L-homocysteine + 2 H(+). In terms of biological role, catalyzes the methylthiolation of N6-(dimethylallyl)adenosine (i(6)A), leading to the formation of 2-methylthio-N6-(dimethylallyl)adenosine (ms(2)i(6)A) at position 37 in tRNAs that read codons beginning with uridine. In Parafrankia sp. (strain EAN1pec), this protein is tRNA-2-methylthio-N(6)-dimethylallyladenosine synthase.